The chain runs to 266 residues: Cytochrome c oxidase assembly factor 7 homolog (266 aa).

2 Sel1-like repeats span residues 32 to 64 (PEAC…DDYG) and 66 to 104 (AKSC…NLND). A compositionally biased stretch (low complexity) spans 166–179 (AVTASSGSGTSSPP). The disordered stretch occupies residues 166 to 187 (AVTASSGSGTSSPPAGQPPLKD). A Sel1-like 3 repeat occupies 212-247 (MYACANLSQMYARGDGIEKNEKEAEKYKKLALEMQD).

Belongs to the hcp beta-lactamase family.

Its function is as follows. Required for locomotion. Probably involved in the regulation of formation/maintenance of motor neurons at presynaptic terminals at the neuromuscular junction. This Drosophila melanogaster (Fruit fly) protein is Cytochrome c oxidase assembly factor 7 homolog.